Here is a 491-residue protein sequence, read N- to C-terminus: G2/mitotic-specific cyclin-2 (491 aa).

Position 2 is an N-acetylserine (S2). Disordered regions lie at residues 59 to 107 (EGSR…DPSS) and 164 to 184 (HPARSQLQVRNTESETDSGKK). A compositionally biased stretch (polar residues) spans 67–77 (TRESVSRSTAA).

It belongs to the cyclin family. Cyclin AB subfamily. In terms of assembly, interacts with NAP1.

In terms of biological role, essential for the control of the cell cycle at the G2/M (mitosis) transition. Interacts with the CDC2 protein kinase to form MPF. G2/M cyclins accumulate steadily during G2 and are abruptly destroyed at mitosis. The polypeptide is G2/mitotic-specific cyclin-2 (CLB2) (Saccharomyces cerevisiae (strain ATCC 204508 / S288c) (Baker's yeast)).